The following is a 133-amino-acid chain: Large ribosomal subunit protein uL22 (133 aa).

It belongs to the universal ribosomal protein uL22 family. Part of the 50S ribosomal subunit.

Functionally, this protein binds specifically to 23S rRNA; its binding is stimulated by other ribosomal proteins, e.g. L4, L17, and L20. It is important during the early stages of 50S assembly. It makes multiple contacts with different domains of the 23S rRNA in the assembled 50S subunit and ribosome. In terms of biological role, the globular domain of the protein is located near the polypeptide exit tunnel on the outside of the subunit, while an extended beta-hairpin is found that lines the wall of the exit tunnel in the center of the 70S ribosome. This chain is Large ribosomal subunit protein uL22, found in Nocardia farcinica (strain IFM 10152).